A 185-amino-acid chain; its full sequence is Ribosome-recycling factor (185 aa).

The protein belongs to the RRF family.

It is found in the cytoplasm. Functionally, responsible for the release of ribosomes from messenger RNA at the termination of protein biosynthesis. May increase the efficiency of translation by recycling ribosomes from one round of translation to another. The protein is Ribosome-recycling factor of Hahella chejuensis (strain KCTC 2396).